Consider the following 190-residue polypeptide: Large ribosomal subunit protein uL6 (190 aa).

It belongs to the universal ribosomal protein uL6 family.

The polypeptide is Large ribosomal subunit protein uL6 (RpL9) (Drosophila melanogaster (Fruit fly)).